The following is a 109-amino-acid chain: uncharacterized protein (109 aa).

This is an uncharacterized protein from Enterobacteriaceae (Bacteriophage P2).